Reading from the N-terminus, the 359-residue chain is S-adenosylmethionine:tRNA ribosyltransferase-isomerase (359 aa).

The protein belongs to the QueA family. Monomer.

The protein resides in the cytoplasm. The enzyme catalyses 7-aminomethyl-7-carbaguanosine(34) in tRNA + S-adenosyl-L-methionine = epoxyqueuosine(34) in tRNA + adenine + L-methionine + 2 H(+). It participates in tRNA modification; tRNA-queuosine biosynthesis. Functionally, transfers and isomerizes the ribose moiety from AdoMet to the 7-aminomethyl group of 7-deazaguanine (preQ1-tRNA) to give epoxyqueuosine (oQ-tRNA). The protein is S-adenosylmethionine:tRNA ribosyltransferase-isomerase of Colwellia psychrerythraea (strain 34H / ATCC BAA-681) (Vibrio psychroerythus).